A 239-amino-acid chain; its full sequence is MSVLAETIKEGAREMGIVITEKQVRQFEEYYSLIIERNKSLNLTAITGEREVAVKHFLDSLTCLKAVPLEDGTSLMDVGTGAGFPGIPLKICRPSVRVKLVESAEKKAVFLREAIGRLGLEMAEAIWARAEDVGKDPDHREKYGCVVARAVAELAVLAEYCLPAAGVGGCFLAMKGPKAEEEAVRAKDAIKILGGRLEEIINLKLPFTGDRRSLVVIRKIGETPEKYPRRPGVPQKRPL.

S-adenosyl-L-methionine is bound by residues Gly-79, Phe-84, 130 to 131, and Arg-149; that span reads AE.

This sequence belongs to the methyltransferase superfamily. RNA methyltransferase RsmG family.

The protein resides in the cytoplasm. Functionally, specifically methylates the N7 position of a guanine in 16S rRNA. In Pelotomaculum thermopropionicum (strain DSM 13744 / JCM 10971 / SI), this protein is Ribosomal RNA small subunit methyltransferase G.